Here is a 121-residue protein sequence, read N- to C-terminus: UPF0102 protein Dhaf_3740 (121 aa).

Belongs to the UPF0102 family.

This is UPF0102 protein Dhaf_3740 from Desulfitobacterium hafniense (strain DSM 10664 / DCB-2).